The sequence spans 201 residues: Large ribosomal subunit protein uL4 (201 aa).

A disordered region spans residues 43–71; sequence TRAQKTRSDVSGGGKKPWRQKGTGRARSG.

Belongs to the universal ribosomal protein uL4 family. As to quaternary structure, part of the 50S ribosomal subunit.

One of the primary rRNA binding proteins, this protein initially binds near the 5'-end of the 23S rRNA. It is important during the early stages of 50S assembly. It makes multiple contacts with different domains of the 23S rRNA in the assembled 50S subunit and ribosome. Functionally, forms part of the polypeptide exit tunnel. In Psychromonas ingrahamii (strain DSM 17664 / CCUG 51855 / 37), this protein is Large ribosomal subunit protein uL4.